Reading from the N-terminus, the 157-residue chain is D-aminoacyl-tRNA deacylase (157 aa).

Residues 137–138 (GP) carry the Gly-cisPro motif, important for rejection of L-amino acids motif.

Belongs to the DTD family. As to quaternary structure, homodimer.

Its subcellular location is the cytoplasm. It catalyses the reaction glycyl-tRNA(Ala) + H2O = tRNA(Ala) + glycine + H(+). The enzyme catalyses a D-aminoacyl-tRNA + H2O = a tRNA + a D-alpha-amino acid + H(+). In terms of biological role, an aminoacyl-tRNA editing enzyme that deacylates mischarged D-aminoacyl-tRNAs. Also deacylates mischarged glycyl-tRNA(Ala), protecting cells against glycine mischarging by AlaRS. Acts via tRNA-based rather than protein-based catalysis; rejects L-amino acids rather than detecting D-amino acids in the active site. By recycling D-aminoacyl-tRNA to D-amino acids and free tRNA molecules, this enzyme counteracts the toxicity associated with the formation of D-aminoacyl-tRNA entities in vivo and helps enforce protein L-homochirality. In Roseiflexus castenholzii (strain DSM 13941 / HLO8), this protein is D-aminoacyl-tRNA deacylase.